The sequence spans 228 residues: uncharacterized protein (228 aa).

21–28 (GMIALGKT) is an ATP binding site.

This is an uncharacterized protein from Mycoplasma genitalium (strain ATCC 33530 / DSM 19775 / NCTC 10195 / G37) (Mycoplasmoides genitalium).